A 101-amino-acid chain; its full sequence is Large ribosomal subunit protein bL21 (101 aa).

The protein belongs to the bacterial ribosomal protein bL21 family. In terms of assembly, part of the 50S ribosomal subunit. Contacts protein L20.

This protein binds to 23S rRNA in the presence of protein L20. The protein is Large ribosomal subunit protein bL21 of Magnetococcus marinus (strain ATCC BAA-1437 / JCM 17883 / MC-1).